The primary structure comprises 65 residues: U15-hexatoxin-Mg1b (65 aa).

In terms of processing, contains 4 disulfide bonds. In terms of tissue distribution, expressed by the venom gland.

The protein localises to the secreted. Functionally, in vivo, intrathorax injection into crickets causes death. The chain is U15-hexatoxin-Mg1b from Macrothele gigas (Japanese funnel web spider).